The chain runs to 239 residues: Small ribosomal subunit protein uS2 (239 aa).

Belongs to the universal ribosomal protein uS2 family.

This chain is Small ribosomal subunit protein uS2, found in Synechococcus sp. (strain WH7803).